The following is a 754-amino-acid chain: 5-methyltetrahydropteroyltriglutamate--homocysteine methyltransferase (754 aa).

Residues 15 to 18 (RELK) and Lys-114 contribute to the 5-methyltetrahydropteroyltri-L-glutamate site. L-homocysteine is bound by residues 430–432 (IGS) and Glu-483. L-methionine contacts are provided by residues 430–432 (IGS) and Glu-483. 5-methyltetrahydropteroyltri-L-glutamate is bound by residues 514 to 515 (RC) and Trp-560. Asp-598 lines the L-homocysteine pocket. Asp-598 is an L-methionine binding site. 5-methyltetrahydropteroyltri-L-glutamate is bound at residue Glu-604. Zn(2+) contacts are provided by His-641, Cys-643, and Glu-665. The active-site Proton donor is the His-694. Residue Cys-726 coordinates Zn(2+).

Belongs to the vitamin-B12 independent methionine synthase family. Zn(2+) is required as a cofactor.

The catalysed reaction is 5-methyltetrahydropteroyltri-L-glutamate + L-homocysteine = tetrahydropteroyltri-L-glutamate + L-methionine. The protein operates within amino-acid biosynthesis; L-methionine biosynthesis via de novo pathway; L-methionine from L-homocysteine (MetE route): step 1/1. In terms of biological role, catalyzes the transfer of a methyl group from 5-methyltetrahydrofolate to homocysteine resulting in methionine formation. The sequence is that of 5-methyltetrahydropteroyltriglutamate--homocysteine methyltransferase from Campylobacter jejuni (strain RM1221).